The sequence spans 763 residues: Phosphoglycerol transferase I (763 aa).

Helical transmembrane passes span 1–21 (MSEL…AWKA), 26–46 (WWFA…ITLF), 77–97 (ILPG…LGWI), and 108–128 (FGYS…SPAF).

This sequence belongs to the OpgB family.

It is found in the cell inner membrane. The catalysed reaction is a phosphatidylglycerol + a membrane-derived-oligosaccharide D-glucose = a 1,2-diacyl-sn-glycerol + a membrane-derived-oligosaccharide 6-(glycerophospho)-D-glucose.. The protein operates within glycan metabolism; osmoregulated periplasmic glucan (OPG) biosynthesis. Transfers a phosphoglycerol residue from phosphatidylglycerol to the membrane-bound nascent glucan backbones. The polypeptide is Phosphoglycerol transferase I (Escherichia coli O7:K1 (strain IAI39 / ExPEC)).